The primary structure comprises 238 residues: Androgen-induced gene 1 protein (238 aa).

The Cytoplasmic segment spans residues 1 to 12; that stretch reads MALVPCQVLRMA. A helical membrane pass occupies residues 13-30; the sequence is ILLSYCSILCNYKAIEMP. Topologically, residues 31–44 are extracellular; the sequence is SHQTYGGSWKFLTF. Residues 45 to 67 traverse the membrane as a helical segment; it reads IDLVIQAVFFGICVLTDLSSLLT. At 68-87 the chain is on the cytoplasmic side; that stretch reads RGSGNQEQERQLKKLISLRD. A helical membrane pass occupies residues 88-110; that stretch reads WMLAVLAFPVGVFVVAVFWIIYA. Topologically, residues 111-124 are extracellular; sequence YDREMIYPKLLDNF. A helical transmembrane segment spans residues 125-144; the sequence is IPGWLNHGMHTTVLPFILIE. Topologically, residues 145–156 are cytoplasmic; it reads MRTSHHQYPSRS. Residues 157 to 179 form a helical membrane-spanning segment; it reads SGLTAICTFSVGYILWVCWVHHV. The Extracellular portion of the chain corresponds to 180-193; that stretch reads TGMWVYPFLEHIGP. Residues 194–216 traverse the membrane as a helical segment; the sequence is GARIIFFGSTTILMNFLYLLGEV. Residues 217–238 are Cytoplasmic-facing; it reads LNNYIWDTQKSMEEEKEKPKLE.

It belongs to the AIG1 family. As to expression, highly expressed in heart, ovary, testis, liver, and kidney, at lower levels in spleen, prostate, brain, skeletal muscle, pancreas, small intestine and colon, and undetected in peripheral blood leukocytes, thymus, lung and placenta. AIG1 expression is higher in hair follicles from males than from females.

The protein resides in the cell membrane. It carries out the reaction 9-hexadecanoyloxy-octadecanoate + H2O = 9-hydroxy-octadecanoate + hexadecanoate + H(+). The catalysed reaction is 12-hexadecanoyloxy-octadecanoate + H2O = 12-hydroxyoctadecanoate + hexadecanoate + H(+). The enzyme catalyses 9-(9Z-hexadecenoyloxy)-octadecanoate + H2O = (9Z)-hexadecenoate + 9-hydroxy-octadecanoate + H(+). It catalyses the reaction 12-(9Z-hexadecenoyloxy)-octadecanoate + H2O = 12-hydroxyoctadecanoate + (9Z)-hexadecenoate + H(+). It carries out the reaction 13-(9Z-hexadecenoyloxy)-octadecanoate + H2O = 13-hydroxy-octadecanoate + (9Z)-hexadecenoate + H(+). The catalysed reaction is 9-octadecanoyloxy-octadecanoate + H2O = 9-hydroxy-octadecanoate + octadecanoate + H(+). The enzyme catalyses 12-octadecanoyloxy-octadecanoate + H2O = 12-hydroxyoctadecanoate + octadecanoate + H(+). It catalyses the reaction 13-octadecanoyloxy-octadecanoate + H2O = 13-hydroxy-octadecanoate + octadecanoate + H(+). It carries out the reaction 9-(9Z-octadecenoyloxy)-octadecanoate + H2O = 9-hydroxy-octadecanoate + (9Z)-octadecenoate + H(+). The catalysed reaction is 12-(9Z-octadecenoyloxy)-octadecanoate + H2O = 12-hydroxyoctadecanoate + (9Z)-octadecenoate + H(+). The enzyme catalyses 13-(9Z-octadecenoyloxy)-octadecanoate + H2O = 13-hydroxy-octadecanoate + (9Z)-octadecenoate + H(+). It catalyses the reaction 5-(9Z-hexadecenoyloxy)-octadecanoate + H2O = 5-hydroxy-octadecanoate + (9Z)-hexadecenoate + H(+). Its activity is regulated as follows. Inhibited by N-hydroxyhydantoin carbamate JJH260 and beta-lactone KC01. In terms of biological role, hydrolyzes bioactive fatty-acid esters of hydroxy-fatty acids (FAHFAs), but not other major classes of lipids. Show a preference for FAHFAs with branching distal from the carboxylate head group of the lipids. The sequence is that of Androgen-induced gene 1 protein (AIG1) from Homo sapiens (Human).